A 552-amino-acid polypeptide reads, in one-letter code: Urocanate hydratase (552 aa).

Residues 49 to 50, glutamine 127, 173 to 175, aspartate 193, 239 to 240, 260 to 264, 270 to 271, and tyrosine 319 contribute to the NAD(+) site; these read GG, GMG, NA, QTSAH, and YI. Residue cysteine 407 is part of the active site. Glycine 489 serves as a coordination point for NAD(+).

The protein belongs to the urocanase family. NAD(+) is required as a cofactor.

The protein resides in the cytoplasm. The enzyme catalyses 4-imidazolone-5-propanoate = trans-urocanate + H2O. It functions in the pathway amino-acid degradation; L-histidine degradation into L-glutamate; N-formimidoyl-L-glutamate from L-histidine: step 2/3. Its function is as follows. Catalyzes the conversion of urocanate to 4-imidazolone-5-propionate. The sequence is that of Urocanate hydratase from Bacillus cereus (strain AH820).